Consider the following 154-residue polypeptide: Interleukin-2 (154 aa).

Residues 1-20 form the signal peptide; it reads MYRMQLLSCIALSLALVTNS. A glycan (O-linked (GalNAc...) threonine) is linked at Thr-23. A disulfide bridge connects residues Cys-78 and Cys-126.

This sequence belongs to the IL-2 family.

The protein localises to the secreted. Functionally, cytokine produced by activated CD4-positive helper T-cells and to a lesser extend activated CD8-positive T-cells and natural killer (NK) cells that plays pivotal roles in the immune response and tolerance. Binds to a receptor complex composed of either the high-affinity trimeric IL-2R (IL2RA/CD25, IL2RB/CD122 and IL2RG/CD132) or the low-affinity dimeric IL-2R (IL2RB and IL2RG). Interaction with the receptor leads to oligomerization and conformation changes in the IL-2R subunits resulting in downstream signaling starting with phosphorylation of JAK1 and JAK3. In turn, JAK1 and JAK3 phosphorylate the receptor to form a docking site leading to the phosphorylation of several substrates including STAT5. This process leads to activation of several pathways including STAT, phosphoinositide-3-kinase/PI3K and mitogen-activated protein kinase/MAPK pathways. Functions as a T-cell growth factor and can increase NK-cell cytolytic activity as well. Promotes strong proliferation of activated B-cells and subsequently immunoglobulin production. Plays a pivotal role in regulating the adaptive immune system by controlling the survival and proliferation of regulatory T-cells, which are required for the maintenance of immune tolerance. Moreover, participates in the differentiation and homeostasis of effector T-cell subsets, including Th1, Th2, Th17 as well as memory CD8-positive T-cells. This is Interleukin-2 (IL2) from Macaca fascicularis (Crab-eating macaque).